Reading from the N-terminus, the 892-residue chain is Formin-like protein 8 (892 aa).

The signal sequence occupies residues 1–23 (MPPAIARFVAIAAVLLCGHVAVA). The interval 43 to 119 (FPIEWTPPPS…SGSGSGHHGG (77 aa)) is disordered. The span at 47-59 (WTPPPSPPPPPAP) shows a compositional bias: pro residues. Positions 87–111 (TTPTSPGTTPSPTTVAADVSKTPSG) are enriched in low complexity. Residues 126 to 146 (IVAAGAGAAAAVALLGFACAF) traverse the membrane as a helical segment. A disordered region spans residues 188–457 (PTTPARHHGP…GSGEPRPKLK (270 aa)). Basic and acidic residues predominate over residues 210–230 (LRSERARRGVSRDEDADHPSP). Composition is skewed to low complexity over residues 268 to 286 (AEAW…TTAS), 297 to 306 (FFPPVAAIAA), and 321 to 330 (RTRFSTGSTP). Over residues 339-383 (SPRPVQPSNAPPPPPPPPPPPPPPPPPKLNTAPKPPPPPPPPPSV) the composition is skewed to pro residues. The span at 424 to 436 (AATTVDNNGSTSM) shows a compositional bias: polar residues. Residues 446–867 (DGGSGEPRPK…GSARSFRISA (422 aa)) enclose the FH2 domain.

Belongs to the formin-like family. Class-I subfamily.

The protein resides in the membrane. In Oryza sativa subsp. japonica (Rice), this protein is Formin-like protein 8 (FH8).